Consider the following 220-residue polypeptide: Kinetochore protein Spc25 (220 aa).

Residues 41-119 (ILLDVKEAAA…NEIMERIHTL (79 aa)) adopt a coiled-coil conformation.

It belongs to the SPC25 family. Component of the Ndc80 complex, which is composed of Ndc80, Nuf2 and Spc25.

It is found in the nucleus. The protein resides in the chromosome. The protein localises to the centromere. It localises to the kinetochore. Functionally, acts as a component of the essential kinetochore-associated Ndc80 complex, which is required for chromosome segregation and spindle checkpoint activity during meiosis and mitosis. Required for kinetochore integrity and the organization of stable microtubule binding sites in the outer plate of the kinetochore. Participates in SAC signaling that responds specifically to disruptions in spindle microtubule dynamics. The NDC80 complex synergistically enhances the affinity of the SKA1 complex for microtubules and may allow the NDC80 complex to track depolymerizing microtubules. The chain is Kinetochore protein Spc25 from Drosophila erecta (Fruit fly).